The following is a 292-amino-acid chain: MNFLHQYYQDIIKKKLENLNDKIQCSFEFFPPKNLDTEKKLFSSVVKLSLLKPFLFSVTYGANSGERKKTYSIVQRIHKKTGITTAPHLTCVDASLSELKEIAKFYWENGIRSIVALRGDVPNKSYQHKIYALDLVVLLKKIADFDISVAAYPEIHPESKNAQSDILNLKKKADAGANRAITQFFFNVESYLRFRDNCIKNNINIEIIPGILPIYNFEQLKKFSSMTNVSIPKWMFEMFNGLDEDLETQKIIGSNIVINIVKTLLYEGVKNFHFYTLNKSDVIYSICHMFGL.

Catalysis depends on Glu28, which acts as the Proton donor/acceptor. An NADH-binding site is contributed by Thr59. 13 residues coordinate FAD: Tyr60, Ala62, His88, Arg118, Gly119, Asp120, Ala132, Tyr152, His156, Asp165, Asn168, Lys171, and Lys172. Asp120 contacts (6S)-5-methyl-5,6,7,8-tetrahydrofolate. Position 183 (Gln183) interacts with NADH. Gln183, Gln219, and Lys279 together coordinate (6S)-5-methyl-5,6,7,8-tetrahydrofolate.

It belongs to the methylenetetrahydrofolate reductase family. It depends on FAD as a cofactor.

It catalyses the reaction (6S)-5-methyl-5,6,7,8-tetrahydrofolate + NAD(+) = (6R)-5,10-methylene-5,6,7,8-tetrahydrofolate + NADH + H(+). The protein operates within one-carbon metabolism; tetrahydrofolate interconversion. It functions in the pathway amino-acid biosynthesis; L-methionine biosynthesis via de novo pathway. In terms of biological role, catalyzes the NADH-dependent reduction of 5,10-methylenetetrahydrofolate to 5-methyltetrahydrofolate. Is required to provide the methyl group necessary for methionine synthetase to convert homocysteine to methionine; the methyl group is given by 5-methyltetrahydrofolate. In Buchnera aphidicola subsp. Schizaphis graminum (strain Sg), this protein is 5,10-methylenetetrahydrofolate reductase (metF).